Consider the following 850-residue polypeptide: Mitogen-activated protein kinase kinase kinase 11 (850 aa).

Serine 11 bears the Phosphoserine mark. The interval 16-35 (WNGSGSGGGGGTGGVRPEGS) is disordered. A compositionally biased stretch (gly residues) spans 17–31 (NGSGSGGGGGTGGVR). Serine 35 carries the phosphoserine modification. Positions 42–106 (YANPVWTALF…PSNYVSRGGG (65 aa)) constitute an SH3 domain. Positions 118–380 (LRLEEVIGIG…ASILQQLEAL (263 aa)) constitute a Protein kinase domain. ATP-binding positions include 124-132 (IGIGGFGKV) and lysine 145. The active-site Proton acceptor is aspartate 242. Threonine 278 is modified (phosphothreonine; by autocatalysis). Serine 282 is subject to Phosphoserine; by autocatalysis and MAP4K1. A Phosphoserine modification is found at serine 395. Leucine-zipper stretches follow at residues 404–425 (IQGL…EEEL) and 439–460 (LRRR…ELTL). Serine 508 and serine 525 each carry phosphoserine. Positions 535–644 (QLEPTESGQT…SSGTPKLIQR (110 aa)) are disordered. The segment covering 538–547 (PTESGQTWGR) has biased composition (polar residues). 3 positions are modified to phosphoserine: serine 549, serine 556, and serine 557. A compositionally biased stretch (basic and acidic residues) spans 551–563 (RRLEDSSNGERRA). Over residues 598 to 610 (SSPLGSPSTPPAL) the composition is skewed to low complexity. Serine 655 is subject to Phosphoserine. Positions 657-850 (GLGRDLQPPG…QAPWAPEAGP (194 aa)) are disordered. Pro residues predominate over residues 677–693 (TAPPPAQMPSPCPPELP). The span at 700-711 (LSQTTPDAHSSP) shows a compositional bias: polar residues. Phosphoserine is present on serine 709. At threonine 712 the chain carries Phosphothreonine. Phosphoserine occurs at positions 728, 731, 743, 751, 761, 773, 792, 796, and 818. Positions 763 to 776 (PLGLISRPRPSPLR) are enriched in low complexity. Residues 790–802 (RPSPLPSPQPAPR) are compositionally biased toward pro residues. Over residues 803-819 (RAPWTLFPDSDPFWDSP) the composition is skewed to low complexity.

It belongs to the protein kinase superfamily. STE Ser/Thr protein kinase family. MAP kinase kinase kinase subfamily. As to quaternary structure, homodimer; undergoes dimerization during activation. Interacts with MAP2K4/MKK4 and MAP2K7/MKK7. Found in a complex with SH3RF1, RAC1, MAP2K7/MKK7, MAPK8IP1/JIP1 and MAPK8/JNK1. It depends on Mg(2+) as a cofactor. In terms of processing, autophosphorylation on serine and threonine residues within the activation loop plays a role in enzyme activation. Thr-278 is likely to be the main autophosphorylation site. Phosphorylation of Ser-556 and Ser-557 is induced by CDC42.

The protein localises to the cytoplasm. It is found in the cytoskeleton. Its subcellular location is the microtubule organizing center. The protein resides in the centrosome. It carries out the reaction L-seryl-[protein] + ATP = O-phospho-L-seryl-[protein] + ADP + H(+). The catalysed reaction is L-threonyl-[protein] + ATP = O-phospho-L-threonyl-[protein] + ADP + H(+). Its activity is regulated as follows. Homodimerization via the leucine zipper domains is required for autophosphorylation and subsequent activation. In terms of biological role, activates the JUN N-terminal pathway. Required for serum-stimulated cell proliferation and for mitogen and cytokine activation of MAPK14 (p38), MAPK3 (ERK) and MAPK8 (JNK1) through phosphorylation and activation of MAP2K4/MKK4 and MAP2K7/MKK7. Plays a role in mitogen-stimulated phosphorylation and activation of BRAF, but does not phosphorylate BRAF directly. Influences microtubule organization during the cell cycle. The sequence is that of Mitogen-activated protein kinase kinase kinase 11 (Map3k11) from Mus musculus (Mouse).